The sequence spans 485 residues: Glycogen synthase (485 aa).

Lysine 21 is a binding site for ADP-alpha-D-glucose.

Belongs to the glycosyltransferase 1 family. Bacterial/plant glycogen synthase subfamily.

The enzyme catalyses [(1-&gt;4)-alpha-D-glucosyl](n) + ADP-alpha-D-glucose = [(1-&gt;4)-alpha-D-glucosyl](n+1) + ADP + H(+). It participates in glycan biosynthesis; glycogen biosynthesis. Synthesizes alpha-1,4-glucan chains using ADP-glucose. In Pseudomonas syringae pv. syringae (strain B728a), this protein is Glycogen synthase.